A 621-amino-acid chain; its full sequence is Cryptochrome-1 (621 aa).

A Photolyase/cryptochrome alpha/beta domain is found at 3–132; sequence VNAVHWFRKG…EVIVRISHTL (130 aa). 3 consecutive short sequence motifs (LIR) follow at residues 50-54, 82-87, and 151-156; these read NRWRF, DVFPRL, and KRFQTL. FAD is bound at residue S252. 4 consecutive short sequence motifs (LIR) follow at residues 255–260, 271–276, 285–290, and 335–339; these read LRFGCL, DLYKKV, SLYGQL, and TGFPW. Position 289 (Q289) interacts with FAD. Residue H355 participates in FAD binding. Positions 379-384 match the LIR 8 motif; that stretch reads KVFEEL. 387–389 is an FAD binding site; the sequence is DAD. 5 short sequence motifs (LIR) span residues 395-400, 411-416, 430-435, 486-491, and 492-497; these read GSWMWL, HCYCPV, RRYLPV, QIYQQL, and SRYRGL. The disordered stretch occupies residues 581-621; it reads QSHLMQPGRASLGTGISAGKRPNPEEETQSVGPKVQRQSTN.

The protein belongs to the DNA photolyase class-1 family. As to quaternary structure, component of the circadian core oscillator, which includes the CRY proteins, CLOCK or NPAS2, BMAL1 or BMAL2, CSNK1E, and the PER proteins. FAD serves as cofactor. (6R)-5,10-methylene-5,6,7,8-tetrahydrofolate is required as a cofactor. As to expression, expressed in the pineal gland.

It is found in the cytoplasm. The protein resides in the nucleus. Its function is as follows. Transcriptional repressor which forms a core component of the circadian clock. The circadian clock, an internal time-keeping system, regulates various physiological processes through the generation of approximately 24 hour circadian rhythms in gene expression, which are translated into rhythms in metabolism and behavior. It is derived from the Latin roots 'circa' (about) and 'diem' (day) and acts as an important regulator of a wide array of physiological functions including metabolism, sleep, body temperature, blood pressure, endocrine, immune, cardiovascular, and renal function. Consists of two major components: the central clock, residing in the suprachiasmatic nucleus (SCN) of the brain, and the peripheral clocks that are present in nearly every tissue and organ system. Both the central and peripheral clocks can be reset by environmental cues, also known as Zeitgebers (German for 'timegivers'). The predominant Zeitgeber for the central clock is light, which is sensed by retina and signals directly to the SCN. The central clock entrains the peripheral clocks through neuronal and hormonal signals, body temperature and feeding-related cues, aligning all clocks with the external light/dark cycle. Circadian rhythms allow an organism to achieve temporal homeostasis with its environment at the molecular level by regulating gene expression to create a peak of protein expression once every 24 hours to control when a particular physiological process is most active with respect to the solar day. Transcription and translation of core clock components (CLOCK, NPAS2, BMAL1, BMAL2, PER1, PER2, PER3, CRY1 and CRY2) plays a critical role in rhythm generation, whereas delays imposed by post-translational modifications (PTMs) are important for determining the period (tau) of the rhythms (tau refers to the period of a rhythm and is the length, in time, of one complete cycle). A diurnal rhythm is synchronized with the day/night cycle, while the ultradian and infradian rhythms have a period shorter and longer than 24 hours, respectively. Disruptions in the circadian rhythms contribute to the pathology of cardiovascular diseases, cancer, metabolic syndromes and aging. A transcription/translation feedback loop (TTFL) forms the core of the molecular circadian clock mechanism. Transcription factors, CLOCK or NPAS2 and BMAL1 or BMAL2, form the positive limb of the feedback loop, act in the form of a heterodimer and activate the transcription of core clock genes and clock-controlled genes (involved in key metabolic processes), harboring E-box elements (5'-CACGTG-3') within their promoters. The core clock genes: PER1/2/3 and CRY1/2 which are transcriptional repressors form the negative limb of the feedback loop and interact with the CLOCK|NPAS2-BMAL1|BMAL2 heterodimer inhibiting its activity and thereby negatively regulating their own expression. This heterodimer also activates nuclear receptors NR1D1/2 and RORA/B/G, which form a second feedback loop and which activate and repress BMAL1 transcription, respectively. CRY1 and CRY2 have redundant functions but also differential and selective contributions at least in defining the pace of the SCN circadian clock and its circadian transcriptional outputs. More potent transcriptional repressor in cerebellum and liver than CRY2, though more effective in lengthening the period of the SCN oscillator. On its side, CRY2 seems to play a critical role in tuning SCN circadian period by opposing the action of CRY1. With CRY2, is dispensable for circadian rhythm generation but necessary for the development of intercellular networks for rhythm synchrony. Capable of translocating circadian clock core proteins such as PER proteins to the nucleus. Interacts with CLOCK-BMAL1 independently of PER proteins and is found at CLOCK-BMAL1-bound sites, suggesting that CRY may act as a molecular gatekeeper to maintain CLOCK-BMAL1 in a poised and repressed state until the proper time for transcriptional activation. Represses CLOCK-BMAL1-mediated transcriptional activation. The chain is Cryptochrome-1 (CRY1) from Gallus gallus (Chicken).